Here is a 276-residue protein sequence, read N- to C-terminus: NADPH-dependent 7-cyano-7-deazaguanine reductase (276 aa).

83 to 85 provides a ligand contact to substrate; it reads IES. Residue 85 to 86 participates in NADPH binding; the sequence is SK. Cysteine 184 functions as the Thioimide intermediate in the catalytic mechanism. Residue aspartate 191 is the Proton donor of the active site. 223-224 contributes to the substrate binding site; the sequence is HE. Residue 252 to 253 coordinates NADPH; the sequence is RG.

Belongs to the GTP cyclohydrolase I family. QueF type 2 subfamily. As to quaternary structure, homodimer.

Its subcellular location is the cytoplasm. It carries out the reaction 7-aminomethyl-7-carbaguanine + 2 NADP(+) = 7-cyano-7-deazaguanine + 2 NADPH + 3 H(+). It functions in the pathway tRNA modification; tRNA-queuosine biosynthesis. In terms of biological role, catalyzes the NADPH-dependent reduction of 7-cyano-7-deazaguanine (preQ0) to 7-aminomethyl-7-deazaguanine (preQ1). This chain is NADPH-dependent 7-cyano-7-deazaguanine reductase, found in Pseudomonas syringae pv. tomato (strain ATCC BAA-871 / DC3000).